The chain runs to 326 residues: Pyruvate dehydrogenase E1 component subunit beta (326 aa).

Glutamate 62 lines the thiamine diphosphate pocket.

As to quaternary structure, heterodimer of an alpha and a beta chain. Requires thiamine diphosphate as cofactor.

It carries out the reaction N(6)-[(R)-lipoyl]-L-lysyl-[protein] + pyruvate + H(+) = N(6)-[(R)-S(8)-acetyldihydrolipoyl]-L-lysyl-[protein] + CO2. The pyruvate dehydrogenase complex catalyzes the overall conversion of pyruvate to acetyl-CoA and CO(2). It contains multiple copies of three enzymatic components: pyruvate dehydrogenase (E1), dihydrolipoamide acetyltransferase (E2) and lipoamide dehydrogenase (E3). This chain is Pyruvate dehydrogenase E1 component subunit beta (pdhB), found in Mycoplasma genitalium (strain ATCC 33530 / DSM 19775 / NCTC 10195 / G37) (Mycoplasmoides genitalium).